The chain runs to 623 residues: Probable methyltransferase PMT8 (623 aa).

The Cytoplasmic segment spans residues 1–13; the sequence is MMRGRSDGGLKKR. A helical; Signal-anchor for type II membrane protein membrane pass occupies residues 14 to 34; the sequence is LIASVCVVALFVCFLFMYYGS. Over 35-623 the chain is Lumenal; sequence SSQGASALEY…LTSESLRDSE (589 aa). 3 N-linked (GlcNAc...) asparagine glycosylation sites follow: asparagine 204, asparagine 350, and asparagine 588.

Belongs to the methyltransferase superfamily.

The protein resides in the golgi apparatus membrane. The polypeptide is Probable methyltransferase PMT8 (Arabidopsis thaliana (Mouse-ear cress)).